The chain runs to 162 residues: Regulatory protein RecX (162 aa).

It belongs to the RecX family.

The protein localises to the cytoplasm. Its function is as follows. Modulates RecA activity. This Pectobacterium atrosepticum (strain SCRI 1043 / ATCC BAA-672) (Erwinia carotovora subsp. atroseptica) protein is Regulatory protein RecX.